Reading from the N-terminus, the 124-residue chain is MTNVLLVALGGSIGAVFRYLISIFMIQVFGSSFPFGTLVVNVIGSFFMGVIYALGQMSHISPELKALIGVGLLGALTTFSTFSNETLLLLQEGDWLKAILNVVLNLSLCLFMVYLGQQLVFSRI.

Helical transmembrane passes span 4 to 24 (VLLV…ISIF), 35 to 55 (FGTL…YALG), 60 to 80 (ISPE…TTFS), and 95 to 115 (WLKA…MVYL). Na(+) contacts are provided by G74 and T77.

The protein belongs to the fluoride channel Fluc/FEX (TC 1.A.43) family.

The protein localises to the cell inner membrane. It catalyses the reaction fluoride(in) = fluoride(out). With respect to regulation, na(+) is not transported, but it plays an essential structural role and its presence is essential for fluoride channel function. Fluoride-specific ion channel. Important for reducing fluoride concentration in the cell, thus reducing its toxicity. The protein is Fluoride-specific ion channel FluC of Shewanella putrefaciens (strain CN-32 / ATCC BAA-453).